A 323-amino-acid polypeptide reads, in one-letter code: o-succinylbenzoate synthase (323 aa).

The Proton donor role is filled by K134. 3 residues coordinate Mg(2+): D162, E191, and D214. The active-site Proton acceptor is the K236.

It belongs to the mandelate racemase/muconate lactonizing enzyme family. MenC type 1 subfamily. Requires a divalent metal cation as cofactor.

It carries out the reaction (1R,6R)-6-hydroxy-2-succinyl-cyclohexa-2,4-diene-1-carboxylate = 2-succinylbenzoate + H2O. It functions in the pathway quinol/quinone metabolism; 1,4-dihydroxy-2-naphthoate biosynthesis; 1,4-dihydroxy-2-naphthoate from chorismate: step 4/7. It participates in quinol/quinone metabolism; menaquinone biosynthesis. Its function is as follows. Converts 2-succinyl-6-hydroxy-2,4-cyclohexadiene-1-carboxylate (SHCHC) to 2-succinylbenzoate (OSB). This is o-succinylbenzoate synthase from Yersinia pestis bv. Antiqua (strain Antiqua).